Consider the following 310-residue polypeptide: Ribosomal protein uL3 glutamine methyltransferase (310 aa).

The protein belongs to the protein N5-glutamine methyltransferase family. PrmB subfamily.

It catalyses the reaction L-glutaminyl-[ribosomal protein uL3] + S-adenosyl-L-methionine = N(5)-methyl-L-glutaminyl-[ribosomal protein uL3] + S-adenosyl-L-homocysteine + H(+). Its function is as follows. Specifically methylates large ribosomal subunit protein uL3 on 'Gln-150'. The chain is Ribosomal protein uL3 glutamine methyltransferase from Salmonella typhi.